Here is a 275-residue protein sequence, read N- to C-terminus: 2,3,4,5-tetrahydropyridine-2,6-dicarboxylate N-succinyltransferase (275 aa).

Substrate contacts are provided by arginine 106 and aspartate 143.

It belongs to the transferase hexapeptide repeat family. In terms of assembly, homotrimer.

It localises to the cytoplasm. The enzyme catalyses (S)-2,3,4,5-tetrahydrodipicolinate + succinyl-CoA + H2O = (S)-2-succinylamino-6-oxoheptanedioate + CoA. Its pathway is amino-acid biosynthesis; L-lysine biosynthesis via DAP pathway; LL-2,6-diaminopimelate from (S)-tetrahydrodipicolinate (succinylase route): step 1/3. The chain is 2,3,4,5-tetrahydropyridine-2,6-dicarboxylate N-succinyltransferase from Rickettsia bellii (strain RML369-C).